A 233-amino-acid chain; its full sequence is Protein Mis18-alpha (233 aa).

Residues S36, S39, and S40 each carry the phosphoserine modification. The Mis18 domain maps to P80–L178. 4 residues coordinate Zn(2+): C85, C88, C141, and C144. Residue K162 forms a Glycyl lysine isopeptide (Lys-Gly) (interchain with G-Cter in SUMO2) linkage. Residue S233 is modified to Phosphoserine.

This sequence belongs to the mis18 family. Homodimer, and heterodimer with OIP5/MIS18B. Identified in a complex containing MIS18A, OIP5/MIS18B, MIS18BP1, RBBP7 and RBBP4. Detected in testis.

The protein resides in the nucleus. It localises to the chromosome. Its subcellular location is the centromere. Its function is as follows. Required for recruitment of CENPA to centromeres and normal chromosome segregation during mitosis. The protein is Protein Mis18-alpha (MIS18A) of Homo sapiens (Human).